Here is a 255-residue protein sequence, read N- to C-terminus: Probable UDP-N-acetylglucosamine pyrophosphorylase (255 aa).

The enzyme catalyses N-acetyl-alpha-D-glucosamine 1-phosphate + UTP + H(+) = UDP-N-acetyl-alpha-D-glucosamine + diphosphate. It participates in nucleotide-sugar biosynthesis; UDP-N-acetyl-alpha-D-glucosamine biosynthesis; UDP-N-acetyl-alpha-D-glucosamine from N-acetyl-alpha-D-glucosamine 1-phosphate: step 1/1. This Acanthamoeba polyphaga (Amoeba) protein is Probable UDP-N-acetylglucosamine pyrophosphorylase.